We begin with the raw amino-acid sequence, 477 residues long: Pup--protein ligase (477 aa).

E16 provides a ligand contact to Mg(2+). Residue R60 coordinates ATP. Mg(2+) is bound at residue Y62. The Proton acceptor role is filled by D64. A Mg(2+)-binding site is contributed by E70. ATP contacts are provided by T73 and W441.

It belongs to the Pup ligase/Pup deamidase family. Pup-conjugating enzyme subfamily.

The catalysed reaction is ATP + [prokaryotic ubiquitin-like protein]-L-glutamate + [protein]-L-lysine = ADP + phosphate + N(6)-([prokaryotic ubiquitin-like protein]-gamma-L-glutamyl)-[protein]-L-lysine.. It participates in protein degradation; proteasomal Pup-dependent pathway. The protein operates within protein modification; protein pupylation. Catalyzes the covalent attachment of the prokaryotic ubiquitin-like protein modifier Pup to the proteasomal substrate proteins, thereby targeting them for proteasomal degradation. This tagging system is termed pupylation. The ligation reaction involves the side-chain carboxylate of the C-terminal glutamate of Pup and the side-chain amino group of a substrate lysine. This Corynebacterium kroppenstedtii (strain DSM 44385 / JCM 11950 / CIP 105744 / CCUG 35717) protein is Pup--protein ligase.